Here is a 162-residue protein sequence, read N- to C-terminus: MESWVFERGSLTRRLKAACGADFNVRVIRQGFAHPFPDEALLLKLRSGRRALVREVELRSRERRLVLARSVLPAQTLKGAGRRLAHLGNRPLGEILFASRRPRRHGFEAALAEDRHWRPAVRAGSGSAGPVWGRRSLYSIAGRPLLVAEFFLPAVLSVPESA.

Arginine 54, leucine 92, and glutamate 149 together coordinate substrate.

It belongs to the UbiC family.

The protein resides in the cytoplasm. The catalysed reaction is chorismate = 4-hydroxybenzoate + pyruvate. It functions in the pathway cofactor biosynthesis; ubiquinone biosynthesis. Removes the pyruvyl group from chorismate, with concomitant aromatization of the ring, to provide 4-hydroxybenzoate (4HB) for the ubiquinone pathway. In Methylococcus capsulatus (strain ATCC 33009 / NCIMB 11132 / Bath), this protein is Probable chorismate pyruvate-lyase.